The sequence spans 337 residues: Mannan polymerase complex subunit mnn9 (337 aa).

Topologically, residues 1–8 are cytoplasmic; that stretch reads MRVYNKSR. The helical; Signal-anchor for type II membrane protein transmembrane segment at 9–29 threads the bilayer; the sequence is IVGQLLFVALGITFIYYLFTP. Over 30 to 337 the chain is Lumenal; the sequence is SVNSNAKVQI…PYYLVFHHNE (308 aa).

The protein belongs to the ANP1/MMN9/VAN1 family.

It localises to the endoplasmic reticulum membrane. The protein localises to the golgi apparatus membrane. The protein operates within protein modification; protein glycosylation. Functionally, required for the addition of the long alpha 1,6-mannose backbone of N-linked glycans on cell wall and periplasmic proteins. The protein is Mannan polymerase complex subunit mnn9 of Schizosaccharomyces pombe (strain 972 / ATCC 24843) (Fission yeast).